The primary structure comprises 531 residues: Lysine--tRNA ligase, mitochondrial (531 aa).

Residues 1–18 (MISRGLLSKGILSIIKRK) constitute a mitochondrion transit peptide.

Belongs to the class-II aminoacyl-tRNA synthetase family.

It localises to the mitochondrion. It carries out the reaction tRNA(Lys) + L-lysine + ATP = L-lysyl-tRNA(Lys) + AMP + diphosphate. This Schizosaccharomyces pombe (strain 972 / ATCC 24843) (Fission yeast) protein is Lysine--tRNA ligase, mitochondrial (msk1).